Consider the following 332-residue polypeptide: Biotin synthase (332 aa).

A Radical SAM core domain is found at 53-282; sequence YFGKKVKLNM…TKEIRISGGR (230 aa). [4Fe-4S] cluster is bound by residues C71, C75, and C78. Positions 115, 147, 207, and 277 each coordinate [2Fe-2S] cluster.

Belongs to the radical SAM superfamily. Biotin synthase family. Homodimer. [4Fe-4S] cluster is required as a cofactor. The cofactor is [2Fe-2S] cluster.

The enzyme catalyses (4R,5S)-dethiobiotin + (sulfur carrier)-SH + 2 reduced [2Fe-2S]-[ferredoxin] + 2 S-adenosyl-L-methionine = (sulfur carrier)-H + biotin + 2 5'-deoxyadenosine + 2 L-methionine + 2 oxidized [2Fe-2S]-[ferredoxin]. Its pathway is cofactor biosynthesis; biotin biosynthesis; biotin from 7,8-diaminononanoate: step 2/2. Its function is as follows. Catalyzes the conversion of dethiobiotin (DTB) to biotin by the insertion of a sulfur atom into dethiobiotin via a radical-based mechanism. The protein is Biotin synthase of Bacillus thuringiensis (strain Al Hakam).